Consider the following 349-residue polypeptide: MTKLRKIIHIDMDYFFAQVEEKANPSLKDKPFAVGGTNPKRGVISTCNYIAREYGVRSAMPTAIAMQKCPNLILLNTDFAKYKAASAVIRDIFYSFTDKVEPLSLDEAYLDVTDVKEYKNSATLIAQAIKQEIFNKTGLTGSAGVAPNKLLAKIASDINKPNGLYVVTPKQVDSFVKDLPVKKLFGVGKVSQEKLKSMGVETCLDLQQLSLATLVDKFGKFGSSLYNYARGIDNREVNPVRIRKSVSVENTYLEDLKTLGACLEKLPSLYDKLTSRMTEEHYKSIIGIVVKFTDTKFNKTSLTRVAKILDKEMLKNLIIELHQKRNHPIRLIGIGVKLGEIDDKQMDLF.

The UmuC domain occupies I7–G188. 2 residues coordinate Mg(2+): D11 and D106. E107 is an active-site residue.

It belongs to the DNA polymerase type-Y family. In terms of assembly, monomer. It depends on Mg(2+) as a cofactor.

It is found in the cytoplasm. It carries out the reaction DNA(n) + a 2'-deoxyribonucleoside 5'-triphosphate = DNA(n+1) + diphosphate. Its function is as follows. Poorly processive, error-prone DNA polymerase involved in untargeted mutagenesis. Copies undamaged DNA at stalled replication forks, which arise in vivo from mismatched or misaligned primer ends. These misaligned primers can be extended by PolIV. Exhibits no 3'-5' exonuclease (proofreading) activity. May be involved in translesional synthesis, in conjunction with the beta clamp from PolIII. In Francisella tularensis subsp. holarctica (strain FTNF002-00 / FTA), this protein is DNA polymerase IV.